The sequence spans 230 residues: PsbP-like protein 1, chloroplastic (230 aa).

This sequence belongs to the PsbP family.

It is found in the plastid. The protein resides in the chloroplast thylakoid lumen. Required for efficient repair of photodamaged PSII, but not tightly associated with the complex. This chain is PsbP-like protein 1, chloroplastic (PPL1), found in Arabidopsis thaliana (Mouse-ear cress).